Consider the following 253-residue polypeptide: 5-oxoprolinase subunit A (253 aa).

Belongs to the LamB/PxpA family. As to quaternary structure, forms a complex composed of PxpA, PxpB and PxpC.

The catalysed reaction is 5-oxo-L-proline + ATP + 2 H2O = L-glutamate + ADP + phosphate + H(+). Catalyzes the cleavage of 5-oxoproline to form L-glutamate coupled to the hydrolysis of ATP to ADP and inorganic phosphate. The polypeptide is 5-oxoprolinase subunit A (Bacillus cereus (strain B4264)).